Consider the following 198-residue polypeptide: MGLEAFLPVALVIGYLLGSIPFGLVLTRLAGTQDIRSIGSGSIGATNVLRTGRKSLAAGTLLLDALKGTVAVVIAGYIAGPNAAMAAGLGAFLGHLFPVWLKFKGGKGVAVYIGILLGLFWPAAVVFCLLWLATAFTTRYSSLSALVASFITPMFLWWFGHLALSALFAVLTLLLFYAHRENIKRLQSGKESRIGEKA.

5 consecutive transmembrane segments (helical) span residues 6-26, 56-78, 83-101, 113-133, and 155-175; these read FLPVALVIGYLLGSIPFGLVL, LAAGTLLLDALKGTVAVVIAGYI, AAMAAGLGAFLGHLFPVWL, IGILLGLFWPAAVVFCLLWLA, and FLWWFGHLALSALFAVLTLLL.

It belongs to the PlsY family. Probably interacts with PlsX.

It is found in the cell inner membrane. It catalyses the reaction an acyl phosphate + sn-glycerol 3-phosphate = a 1-acyl-sn-glycero-3-phosphate + phosphate. The protein operates within lipid metabolism; phospholipid metabolism. Its function is as follows. Catalyzes the transfer of an acyl group from acyl-phosphate (acyl-PO(4)) to glycerol-3-phosphate (G3P) to form lysophosphatidic acid (LPA). This enzyme utilizes acyl-phosphate as fatty acyl donor, but not acyl-CoA or acyl-ACP. This is Glycerol-3-phosphate acyltransferase from Bradyrhizobium diazoefficiens (strain JCM 10833 / BCRC 13528 / IAM 13628 / NBRC 14792 / USDA 110).